Here is a 521-residue protein sequence, read N- to C-terminus: UPF0053 protein BU323 (521 aa).

7 consecutive transmembrane segments (helical) span residues 13–33 (LLTL…FVAI), 49–69 (IGLG…SWIV), 80–100 (FFSL…LLFK), 125–145 (FWAV…DAII), 150–170 (MVNQ…LMLL), 185–205 (VVVL…TEAL), and 207–227 (FCIP…IEIF). CBS domains follow at residues 311 to 370 (MTPR…KIDA) and 374 to 434 (SSKI…DADE).

The protein belongs to the UPF0053 family.

It is found in the cell membrane. In Buchnera aphidicola subsp. Acyrthosiphon pisum (strain APS) (Acyrthosiphon pisum symbiotic bacterium), this protein is UPF0053 protein BU323.